Here is a 131-residue protein sequence, read N- to C-terminus: Small ribosomal subunit protein eS6 (131 aa).

The protein belongs to the eukaryotic ribosomal protein eS6 family.

The chain is Small ribosomal subunit protein eS6 from Halobacterium salinarum (strain ATCC 29341 / DSM 671 / R1).